A 365-amino-acid chain; its full sequence is Protein RecA (365 aa).

73-80 is an ATP binding site; it reads GPESSGKT.

This sequence belongs to the RecA family.

The protein localises to the cytoplasm. Its function is as follows. Can catalyze the hydrolysis of ATP in the presence of single-stranded DNA, the ATP-dependent uptake of single-stranded DNA by duplex DNA, and the ATP-dependent hybridization of homologous single-stranded DNAs. It interacts with LexA causing its activation and leading to its autocatalytic cleavage. The protein is Protein RecA of Prochlorococcus marinus (strain MIT 9312).